We begin with the raw amino-acid sequence, 955 residues long: 4-alpha-glucanotransferase DPE2 (955 aa).

Methionine 1 carries the N-acetylmethionine modification. 2 CBM20 domains span residues 13–122 (KSSK…LWQS) and 157–270 (SDQD…PWRG). Positions 925 to 955 (SGRSVPANVSGEDINKSRGEVIANGSTKPNP) are disordered.

The protein belongs to the disproportionating enzyme family.

It localises to the cytoplasm. The protein localises to the cytosol. It carries out the reaction Transfers a segment of a (1-&gt;4)-alpha-D-glucan to a new position in an acceptor, which may be glucose or a (1-&gt;4)-alpha-D-glucan.. Its activity is regulated as follows. Inactivated in response to cold stress. In terms of biological role, cytosolic alpha-glucanotransferase essential for the cytosolic metabolism of maltose, an intermediate on the pathway by which starch is converted to sucrose in leaves at night. Metabolizes maltose exported from the chloroplast and is specific for beta-maltose. May play a role in freezing tolerance. Temperature drop induces inactivation of DPE2 that leads to rapid accumulation of maltose, a solute that protects cells from freezing damage. In Arabidopsis thaliana (Mouse-ear cress), this protein is 4-alpha-glucanotransferase DPE2 (DPE2).